A 34-amino-acid chain; its full sequence is Cytochrome b6-f complex subunit 7 (34 aa).

A helical membrane pass occupies residues 9 to 29 (ALLSFGLIFVGWALGALLLKI).

It belongs to the PetM family. As to quaternary structure, the 4 large subunits of the cytochrome b6-f complex are cytochrome b6, subunit IV (17 kDa polypeptide, PetD), cytochrome f and the Rieske protein, while the 4 small subunits are PetG, PetL, PetM and PetN. The complex functions as a dimer.

Its subcellular location is the cellular thylakoid membrane. In terms of biological role, component of the cytochrome b6-f complex, which mediates electron transfer between photosystem II (PSII) and photosystem I (PSI), cyclic electron flow around PSI, and state transitions. In Nostoc sp. (strain PCC 7120 / SAG 25.82 / UTEX 2576), this protein is Cytochrome b6-f complex subunit 7.